The following is an 860-amino-acid chain: MSFVRVNRYGPRGGGRKTLKVKKKTSVKQEWDNTVTDLTVHRATPEDLIRRHEIHKSKNRALVHWELQEKALKRRWKKQKPEISNLEKRRLSIMKEILSDQYQLQDVLEKSDHLMATAKGLFVDFPRRRTGFPNVTMAPESSQSPTVVSKDPVTQAIRSESVIEPQALNEVDDDEQEGTVNSQSEESENELDNSLSSQSNANAGTFLHQIKEENSELINKLWTDIQQKVATQSQMTASSGTPSSASPSGEQKAALNATNAVKRIHTRLQPEESTETLDSSYVVGQVLNSRKQKQLLNKVKRKPDSRAPSKQKSSMLSASTASTDLPSSSNPSLDVLKHMIHEVEHEIEEYERWTGREVQGLQNSQGLTGFTLSLVSSLCRLVRYLKESELQLRKEVETRQRLEEALGDHRELIDALTAEVLFLREENTATQARLQQYMITTDEQLISLTHAIKNCPVISNKESQALERGATSQRHIDNPEDPAVNASVSMPLMFRGEDVVEFPQEDLPVKLSQVPNPPESGDLASSLPGHIFEPAVLLTPPRQKSNSEFSPLQDVLRRTVQTRPAPRIPPTVEIIEKEQNWEKKTLPVGADIQNSSDESHLFTQRWRASHMGEDSQSKTQAPFVSLSQPLCSSQSSMQQSRNPTLSEEPLVLGDGQQLRTNETLIQRKDIMARIAELTLQNSDIRAHLNNIIGPGGEQGDGLREFNRQETSHASDTMATFPAVQPLTPSSMEERIAELNRQSMEARGKLLQLIEQQKLLGLNPSSPPVSPVQSPLRAWAEGGKRTIEVSIPGAEAPESSKCSTDSPTSGLNSRRSSGAASNSCSPLNATSGSGRLTPLNPRAKIEKQNEEGWFALSTHVS.

3 disordered regions span residues 160–200, 232–254, and 293–330; these read ESVI…SQSN, QSQM…QKAA, and KQLL…SSSN. At Thr236 the chain carries Phosphothreonine. A compositionally biased stretch (low complexity) spans 236–249; it reads TASSGTPSSASPSG. Positions 308–330 are enriched in polar residues; sequence PSKQKSSMLSASTASTDLPSSSN. Positions 383–437 form a coiled coil; the sequence is RYLKESELQLRKEVETRQRLEEALGDHRELIDALTAEVLFLREENTATQARLQQY. Phosphoserine is present on Ser646. A coiled-coil region spans residues 729-755; the sequence is SSMEERIAELNRQSMEARGKLLQLIEQ. Phosphoserine is present on residues Ser765, Ser769, and Ser824. Residues 790-860 are disordered; the sequence is IPGAEAPESS…GWFALSTHVS (71 aa). Over residues 808 to 824 the composition is skewed to low complexity; it reads SGLNSRRSSGAASNSCS.

Interacts with CEP120.

Its subcellular location is the cytoplasm. It is found in the cytoskeleton. The protein resides in the microtubule organizing center. The protein localises to the centrosome. It localises to the centriole. Its subcellular location is the spindle. Regulator required for centriole duplication. for proper bipolar spindle formation and chromosome congression in mitosis. The protein is Spindle and centriole-associated protein 1 (SPICE1) of Bos taurus (Bovine).